Here is a 242-residue protein sequence, read N- to C-terminus: Uridylate kinase (242 aa).

17–20 (KLSG) is a binding site for ATP. Glycine 59 contributes to the UMP binding site. The ATP site is built by glycine 60 and arginine 64. UMP-binding positions include aspartate 79 and 140-147 (TGNPFFTT). Threonine 167, tyrosine 173, and aspartate 176 together coordinate ATP.

The protein belongs to the UMP kinase family. In terms of assembly, homohexamer.

It localises to the cytoplasm. It carries out the reaction UMP + ATP = UDP + ADP. The protein operates within pyrimidine metabolism; CTP biosynthesis via de novo pathway; UDP from UMP (UMPK route): step 1/1. Inhibited by UTP. In terms of biological role, catalyzes the reversible phosphorylation of UMP to UDP. The chain is Uridylate kinase from Marinobacter nauticus (strain ATCC 700491 / DSM 11845 / VT8) (Marinobacter aquaeolei).